A 254-amino-acid polypeptide reads, in one-letter code: Thiamine thiazole synthase (254 aa).

NAD(+) contacts are provided by residues serine 36, 55–56, glycine 63, valine 127, and 154–156; these read EK and HVD. Residues aspartate 156 and histidine 171 each contribute to the Fe cation site. Methionine 219 contributes to the NAD(+) binding site. Residue arginine 229 participates in glycine binding.

It belongs to the THI4 family. Homooctamer; tetramer of dimers. Requires Fe(2+) as cofactor.

The enzyme catalyses hydrogen sulfide + glycine + NAD(+) = ADP-5-ethyl-4-methylthiazole-2-carboxylate + nicotinamide + 3 H2O + H(+). It participates in cofactor biosynthesis; thiamine diphosphate biosynthesis. In terms of biological role, involved in the biosynthesis of the thiazole moiety of thiamine. Catalyzes the conversion of NAD and glycine to adenosine diphosphate 5-(2-hydroxyethyl)-4-methylthiazole-2-carboxylate (ADT), an adenylated thiazole intermediate, using free sulfide as a source of sulfur. This chain is Thiamine thiazole synthase, found in Methanoculleus marisnigri (strain ATCC 35101 / DSM 1498 / JR1).